Consider the following 153-residue polypeptide: H/ACA ribonucleoprotein complex subunit 2 (153 aa).

K3 participates in a covalent cross-link: Glycyl lysine isopeptide (Lys-Gly) (interchain with G-Cter in SUMO2). Residue K5 forms a Glycyl lysine isopeptide (Lys-Gly) (interchain with G-Cter in SUMO); alternate linkage. Residue K5 forms a Glycyl lysine isopeptide (Lys-Gly) (interchain with G-Cter in SUMO1); alternate linkage. K5 is covalently cross-linked (Glycyl lysine isopeptide (Lys-Gly) (interchain with G-Cter in SUMO2); alternate).

Belongs to the eukaryotic ribosomal protein eL8 family. In terms of assembly, part of the H/ACA small nucleolar ribonucleoprotein (H/ACA snoRNP) complex, which contains NHP2/NOLA2, GAR1/NOLA1, NOP10/NOLA3, and DKC1/NOLA4, which is presumed to be the catalytic subunit. The complex contains a stable core formed by binding of one or two NOP10-DKC1 heterodimers to NHP2; GAR1 subsequently binds to this core via DKC1. The complex binds a box H/ACA small nucleolar RNA (snoRNA), which may target the specific site of modification within the RNA substrate. During assembly, the complex contains NAF1 instead of GAR1/NOLA1. The complex also interacts with TERC, which contains a 3'-terminal domain related to the box H/ACA snoRNAs. Specific interactions with snoRNAs or TERC are mediated by GAR1 and NHP2. Associates with NOLC1/NOPP140. H/ACA snoRNPs interact with the SMN complex, consisting of SMN1 or SMN2, GEMIN2/SIP1, DDX20/GEMIN3, and GEMIN4. This is mediated by interaction between GAR1 and SMN1 or SMN2. The SMN complex may be required for correct assembly of the H/ACA snoRNP complex. Component of the telomerase holoenzyme complex composed of one molecule of TERT, one molecule of WRAP53/TCAB1, two molecules of H/ACA ribonucleoprotein complex subunits DKC1, NOP10, NHP2 and GAR1, and a telomerase RNA template component (TERC). The telomerase holoenzyme complex is associated with TEP1, SMG6/EST1A and POT1.

Its subcellular location is the nucleus. The protein resides in the nucleolus. The protein localises to the cajal body. In terms of biological role, required for ribosome biogenesis and telomere maintenance. Part of the H/ACA small nucleolar ribonucleoprotein (H/ACA snoRNP) complex, which catalyzes pseudouridylation of rRNA. This involves the isomerization of uridine such that the ribose is subsequently attached to C5, instead of the normal N1. Each rRNA can contain up to 100 pseudouridine ('psi') residues, which may serve to stabilize the conformation of rRNAs. May also be required for correct processing or intranuclear trafficking of TERC, the RNA component of the telomerase reverse transcriptase (TERT) holoenzyme. In Bos taurus (Bovine), this protein is H/ACA ribonucleoprotein complex subunit 2 (NHP2).